A 201-amino-acid polypeptide reads, in one-letter code: Imidazoleglycerol-phosphate dehydratase (201 aa).

Belongs to the imidazoleglycerol-phosphate dehydratase family.

Its subcellular location is the cytoplasm. The catalysed reaction is D-erythro-1-(imidazol-4-yl)glycerol 3-phosphate = 3-(imidazol-4-yl)-2-oxopropyl phosphate + H2O. It functions in the pathway amino-acid biosynthesis; L-histidine biosynthesis; L-histidine from 5-phospho-alpha-D-ribose 1-diphosphate: step 6/9. This is Imidazoleglycerol-phosphate dehydratase from Methanopyrus kandleri (strain AV19 / DSM 6324 / JCM 9639 / NBRC 100938).